The sequence spans 321 residues: RNA/RNP complex-1-interacting phosphatase (321 aa).

The span at 1–11 shows a compositional bias: basic residues; it reads MNQHYGRHGRG. The disordered stretch occupies residues 1 to 27; that stretch reads MNQHYGRHGRGRGRDFAACAPPKKKGR. In terms of domain architecture, Tyrosine-protein phosphatase spans 60 to 207; the sequence is FEAKLMPEEC…LQKRHVRKNR (148 aa). The active-site Phosphocysteine intermediate is the cysteine 151. 152 to 157 contacts substrate; that stretch reads THGLNR. Arginine 157 acts as the Proton donor/acceptor in catalysis. Residues 205 to 262 form a disordered region; sequence KNRNVSAPRTDGLEDSADPTEQVYTNNKPVKKKPRKNRRGGHLAPSQHFQHQTQSSPY. Basic residues predominate over residues 233–245; sequence PVKKKPRKNRRGG. Polar residues predominate over residues 251 to 262; the sequence is QHFQHQTQSSPY.

It belongs to the protein-tyrosine phosphatase family. Non-receptor class dual specificity subfamily. As to quaternary structure, monomer. May interact with SFRS7 and SFRS9/SRP30C.

The protein resides in the nucleus. The protein localises to the nucleus speckle. Possesses RNA 5'-triphosphatase and diphosphatase activities, but displays a poor protein-tyrosine phosphatase activity. In addition, has phosphatase activity with ATP, ADP and O-methylfluorescein phosphate (in vitro). Binds to RNA. May participate in nuclear mRNA metabolism. The sequence is that of RNA/RNP complex-1-interacting phosphatase (Dusp11) from Mus musculus (Mouse).